Here is a 105-residue protein sequence, read N- to C-terminus: Large ribosomal subunit protein uL24 (105 aa).

Belongs to the universal ribosomal protein uL24 family. In terms of assembly, part of the 50S ribosomal subunit.

One of two assembly initiator proteins, it binds directly to the 5'-end of the 23S rRNA, where it nucleates assembly of the 50S subunit. In terms of biological role, one of the proteins that surrounds the polypeptide exit tunnel on the outside of the subunit. This Tolumonas auensis (strain DSM 9187 / NBRC 110442 / TA 4) protein is Large ribosomal subunit protein uL24.